We begin with the raw amino-acid sequence, 108 residues long: Large ribosomal subunit protein bL31B (108 aa).

The tract at residues 88–108 (AAVEEAPAVKSKKKAPIKKKK) is disordered. Basic residues predominate over residues 97–108 (KSKKKAPIKKKK).

This sequence belongs to the bacterial ribosomal protein bL31 family. Type B subfamily. In terms of assembly, part of the 50S ribosomal subunit.

This is Large ribosomal subunit protein bL31B from Chlamydia abortus (strain DSM 27085 / S26/3) (Chlamydophila abortus).